The chain runs to 586 residues: Solute carrier family 13 member 2 (586 aa).

Transmembrane regions (helical) follow at residues 13–33 (SYLI…IVQT), 53–73 (ALPL…MGIM), and 86–106 (TNIL…WNLH). Over residues 165–175 (DVEEGNSNPSF) the composition is skewed to polar residues. The interval 165–209 (DVEEGNSNPSFELQEASPQKEETKLDNGQAVSVSSEPRAQKTKEH) is disordered. 9 consecutive transmembrane segments (helical) span residues 215-235 (GLSL…LTGT), 264-284 (FAFP…QVLF), 319-339 (PMSF…VLWF), 366-386 (GTVA…IPGL), 407-427 (TVND…FALA), 445-465 (PLQH…VAIF), 478-498 (FLPI…YVML), 506-526 (LAFM…FGGL), and 535-555 (GFLL…SWSI).

The protein belongs to the SLC13A/DASS transporter (TC 2.A.47) family. NADC subfamily. In terms of tissue distribution, highly expressed in kidney and small intestine. Not detectable in brain, heart, stomach and skeletal muscle.

The protein localises to the apical cell membrane. It carries out the reaction succinate(out) + 3 Na(+)(out) = succinate(in) + 3 Na(+)(in). It catalyses the reaction fumarate(out) + 3 Na(+)(out) = fumarate(in) + 3 Na(+)(in). The enzyme catalyses 2-oxoglutarate(out) + 3 Na(+)(out) = 2-oxoglutarate(in) + 3 Na(+)(in). Li(+) decreases succinate transport in the presence of Na(+), by competing at one of the three cation binding sites. Low-affinity sodium-dicarboxylate cotransporter, that mediates the entry of citric acid cycle intermediates, such as succinate, citrate, fumarate and alpha-ketoglutarate (2-oxoglutarate) into the small intestine and renal proximal tubule. Can transport citrate in a Na(+)-dependent manner, recognizing the divalent form of citrate rather than the trivalent form which is normally found in blood. Transports the dicarboxylate into the cell with a probable stoichiometry of 3 Na(+) for 1 divalent dicarboxylate, rendering the process electrogenic. Has a critical role in renal dicarboxylate transport. In Mus musculus (Mouse), this protein is Solute carrier family 13 member 2 (Slc13a2).